Consider the following 444-residue polypeptide: C4-dicarboxylate transport protein (444 aa).

8 consecutive transmembrane segments (helical) span residues 7 to 29, 44 to 66, 79 to 101, 143 to 165, 186 to 208, 221 to 243, 291 to 313, and 353 to 375; these read LYKS…GHFY, IKLI…IAGM, ALLY…VNVV, IVGA…FGFA, VMFN…AMAF, LGQL…LGAI, VVGL…YLTM, and FIVL…ALIL. Residues 418 to 444 are disordered; it reads SGGRAISDTREEDDLGVAEGPTPTTVK.

The protein belongs to the dicarboxylate/amino acid:cation symporter (DAACS) (TC 2.A.23) family.

It is found in the cell inner membrane. Responsible for the transport of dicarboxylates such as succinate, fumarate, and malate from the periplasm across the inner membrane. This chain is C4-dicarboxylate transport protein, found in Pseudomonas chlororaphis (Pseudomonas aureofaciens).